Here is a 666-residue protein sequence, read N- to C-terminus: Translation factor guf1, mitochondrial (666 aa).

Residues 1-44 (MRGCLQLGRWLSAAPRCQAASLRPPTVFPSYRYNRSFSTTTIYY) constitute a mitochondrion transit peptide. A tr-type G domain is found at 68–248 (ERFRNFCIVA…TVVEKVPAPI (181 aa)). GTP contacts are provided by residues 77–84 (AHVDHGKS), 141–145 (DTPGH), and 195–198 (NKVD).

Belongs to the TRAFAC class translation factor GTPase superfamily. Classic translation factor GTPase family. LepA subfamily.

The protein resides in the mitochondrion inner membrane. The catalysed reaction is GTP + H2O = GDP + phosphate + H(+). Promotes mitochondrial protein synthesis. May act as a fidelity factor of the translation reaction, by catalyzing a one-codon backward translocation of tRNAs on improperly translocated ribosomes. Binds to mitochondrial ribosomes in a GTP-dependent manner. In Penicillium rubens (strain ATCC 28089 / DSM 1075 / NRRL 1951 / Wisconsin 54-1255) (Penicillium chrysogenum), this protein is Translation factor guf1, mitochondrial (guf1).